A 319-amino-acid chain; its full sequence is tRNA uridine(34) hydroxylase (319 aa).

Positions 127-221 constitute a Rhodanese domain; the sequence is KQEDTVIIDA…YGKDPEVQGE (95 aa). The Cysteine persulfide intermediate role is filled by cysteine 181.

This sequence belongs to the TrhO family.

The enzyme catalyses uridine(34) in tRNA + AH2 + O2 = 5-hydroxyuridine(34) in tRNA + A + H2O. Its function is as follows. Catalyzes oxygen-dependent 5-hydroxyuridine (ho5U) modification at position 34 in tRNAs. This is tRNA uridine(34) hydroxylase from Bacillus thuringiensis (strain Al Hakam).